The following is a 138-amino-acid chain: Large ribosomal subunit protein eL14A (138 aa).

At serine 2 the chain carries N-acetylserine.

It belongs to the eukaryotic ribosomal protein eL14 family. Component of the large ribosomal subunit (LSU). Mature yeast ribosomes consist of a small (40S) and a large (60S) subunit. The 40S small subunit contains 1 molecule of ribosomal RNA (18S rRNA) and 33 different proteins (encoded by 57 genes). The large 60S subunit contains 3 rRNA molecules (25S, 5.8S and 5S rRNA) and 46 different proteins (encoded by 81 genes). N-terminally acetylated by acetyltransferase NatA.

The protein resides in the cytoplasm. Component of the ribosome, a large ribonucleoprotein complex responsible for the synthesis of proteins in the cell. The small ribosomal subunit (SSU) binds messenger RNAs (mRNAs) and translates the encoded message by selecting cognate aminoacyl-transfer RNA (tRNA) molecules. The large subunit (LSU) contains the ribosomal catalytic site termed the peptidyl transferase center (PTC), which catalyzes the formation of peptide bonds, thereby polymerizing the amino acids delivered by tRNAs into a polypeptide chain. The nascent polypeptides leave the ribosome through a tunnel in the LSU and interact with protein factors that function in enzymatic processing, targeting, and the membrane insertion of nascent chains at the exit of the ribosomal tunnel. This chain is Large ribosomal subunit protein eL14A, found in Saccharomyces cerevisiae (strain ATCC 204508 / S288c) (Baker's yeast).